Here is a 284-residue protein sequence, read N- to C-terminus: RNA polymerase sigma factor RpoH (284 aa).

A sigma-70 factor domain-2 region spans residues 53-122; sequence LILSHLRFVI…IHEYVLRNWR (70 aa). Residues 77-80 carry the Interaction with polymerase core subunit RpoC motif; the sequence is DLIQ. The interval 228–280 is sigma-70 factor domain-4; it reads ALLRLDERSRHIIHARWLDKNKKNTLQNIANNYGISAERVRQLEKNAMKKLKL. A DNA-binding region (H-T-H motif) is located at residues 253–272; it reads LQNIANNYGISAERVRQLEK.

It belongs to the sigma-70 factor family. RpoH subfamily. In terms of assembly, interacts with the RNA polymerase core enzyme.

It localises to the cytoplasm. In terms of biological role, sigma factors are initiation factors that promote the attachment of RNA polymerase to specific initiation sites and are then released. This sigma factor is involved in regulation of expression of heat shock genes. This chain is RNA polymerase sigma factor RpoH, found in Buchnera aphidicola subsp. Acyrthosiphon pisum (strain APS) (Acyrthosiphon pisum symbiotic bacterium).